The following is a 252-amino-acid chain: 5'-nucleotidase SurE (252 aa).

Residues Asp-8, Asp-9, Ser-39, and Asn-96 each contribute to the a divalent metal cation site.

It belongs to the SurE nucleotidase family. It depends on a divalent metal cation as a cofactor.

The protein resides in the cytoplasm. It carries out the reaction a ribonucleoside 5'-phosphate + H2O = a ribonucleoside + phosphate. Nucleotidase that shows phosphatase activity on nucleoside 5'-monophosphates. The sequence is that of 5'-nucleotidase SurE from Petrotoga mobilis (strain DSM 10674 / SJ95).